The following is a 632-amino-acid chain: Chaperone protein DnaK (632 aa).

Thr-198 carries the post-translational modification Phosphothreonine; by autocatalysis. Positions 599–632 are disordered; sequence YKKAGASQQGAGSTTQSKKEEDVIEAEVEDKDNK. Polar residues predominate over residues 604–614; that stretch reads ASQQGAGSTTQ. A compositionally biased stretch (acidic residues) spans 620–632; sequence DVIEAEVEDKDNK.

This sequence belongs to the heat shock protein 70 family.

Functionally, acts as a chaperone. The polypeptide is Chaperone protein DnaK (Thermodesulfovibrio yellowstonii (strain ATCC 51303 / DSM 11347 / YP87)).